We begin with the raw amino-acid sequence, 253 residues long: Prolactin-7A2 (253 aa).

An N-terminal signal peptide occupies residues 1 to 30; that stretch reads MSFSFSQPCPSGALLLVVVSSLLLWENVAS. N-linked (GlcNAc...) asparagine glycosylation is found at Asn36, Asn103, and Asn135. Intrachain disulfides connect Cys101–Cys218 and Cys235–Cys244.

It belongs to the somatotropin/prolactin family. Expression restricted to the placental tissue. Expressed only in the spongiotrophoblasts.

The protein resides in the secreted. In Mus musculus (Mouse), this protein is Prolactin-7A2 (Prl7a2).